A 348-amino-acid chain; its full sequence is Protein-glutamate methylesterase/protein-glutamine glutaminase 5 (348 aa).

Residues arginine 8–glutamate 125 form the Response regulatory domain. At aspartate 59 the chain carries 4-aspartylphosphate. The region spanning arginine 157 to arginine 348 is the CheB-type methylesterase domain. Catalysis depends on residues serine 169, histidine 196, and aspartate 292.

It belongs to the CheB family. Phosphorylated by CheA. Phosphorylation of the N-terminal regulatory domain activates the methylesterase activity.

It localises to the cytoplasm. The catalysed reaction is [protein]-L-glutamate 5-O-methyl ester + H2O = L-glutamyl-[protein] + methanol + H(+). It carries out the reaction L-glutaminyl-[protein] + H2O = L-glutamyl-[protein] + NH4(+). Functionally, involved in chemotaxis. Part of a chemotaxis signal transduction system that modulates chemotaxis in response to various stimuli. Catalyzes the demethylation of specific methylglutamate residues introduced into the chemoreceptors (methyl-accepting chemotaxis proteins or MCP) by CheR. Also mediates the irreversible deamidation of specific glutamine residues to glutamic acid. This chain is Protein-glutamate methylesterase/protein-glutamine glutaminase 5, found in Myxococcus xanthus (strain DK1622).